Consider the following 139-residue polypeptide: Thiosulfate:glutathione sulfurtransferase (139 aa).

Position 26 is a phosphoserine (serine 26). A Rhodanese domain is found at 37–138 (HDPNVVLVDV…WVSHGGDKLD (102 aa)). The active-site Cysteine persulfide intermediate is cysteine 98.

The protein localises to the mitochondrion. The catalysed reaction is thiosulfate + glutathione = S-sulfanylglutathione + sulfite + H(+). Its activity is regulated as follows. GSS(-) is a potent inhibitor of RDL1, since the presence of the sulfur dioxygenase strongly increases the RDL1 catalytic activity. Thiosulfate:glutathione sulfurtransferase (TST) required to produce S-sulfanylglutathione (GSS(-)), a central intermediate in hydrogen sulfide metabolism. Provides the link between the first step in H(2)S metabolism performed by the sulfide:quinone oxidoreductase (SQOR) which catalyzes the conversion of H(2)S to thiosulfate, and the sulfur dioxygenase (SDO) which uses GSS(-) as substrate. The thermodynamic coupling of the irreversible SDO and reversible TST reactions provides a model for the physiologically relevant reaction with thiosulfate as the sulfane donor. The protein is Thiosulfate:glutathione sulfurtransferase (RDL1) of Saccharomyces cerevisiae (strain ATCC 204508 / S288c) (Baker's yeast).